The sequence spans 466 residues: Methylenetetrahydrofolate--tRNA-(uracil-5-)-methyltransferase TrmFO (466 aa).

14-19 (GGGLAG) is a binding site for FAD.

It belongs to the MnmG family. TrmFO subfamily. FAD serves as cofactor.

Its subcellular location is the cytoplasm. It catalyses the reaction uridine(54) in tRNA + (6R)-5,10-methylene-5,6,7,8-tetrahydrofolate + NADH + H(+) = 5-methyluridine(54) in tRNA + (6S)-5,6,7,8-tetrahydrofolate + NAD(+). It carries out the reaction uridine(54) in tRNA + (6R)-5,10-methylene-5,6,7,8-tetrahydrofolate + NADPH + H(+) = 5-methyluridine(54) in tRNA + (6S)-5,6,7,8-tetrahydrofolate + NADP(+). Its function is as follows. Catalyzes the folate-dependent formation of 5-methyl-uridine at position 54 (M-5-U54) in all tRNAs. This is Methylenetetrahydrofolate--tRNA-(uracil-5-)-methyltransferase TrmFO from Brucella suis (strain ATCC 23445 / NCTC 10510).